The sequence spans 194 residues: Adenylate kinase (194 aa).

8–16 (GIPGVGKST) provides a ligand contact to ATP.

It belongs to the archaeal adenylate kinase family. Homotrimer.

The protein localises to the cytoplasm. The catalysed reaction is AMP + ATP = 2 ADP. This chain is Adenylate kinase (adkA), found in Sulfolobus acidocaldarius (strain ATCC 33909 / DSM 639 / JCM 8929 / NBRC 15157 / NCIMB 11770).